A 297-amino-acid chain; its full sequence is ER membrane protein complex subunit 2-B (297 aa).

TPR repeat units lie at residues 87 to 120 (HRVKRLTGLRFEAMERYDDALQIYDRILQDDPTN), 155 to 188 (QEAWHELAELYINELDYAKAAFCLEELILTNPHN), and 192 to 225 (YQQFAEVKYTQGGLENLELSRKYFSQALKLNNHS).

This sequence belongs to the EMC2 family. In terms of assembly, component of the ER membrane protein complex (EMC).

The protein localises to the endoplasmic reticulum membrane. Part of the endoplasmic reticulum membrane protein complex (EMC) that enables the energy-independent insertion into endoplasmic reticulum membranes of newly synthesized membrane proteins. Preferentially accommodates proteins with transmembrane domains that are weakly hydrophobic or contain destabilizing features such as charged and aromatic residues. Involved in the cotranslational insertion of multi-pass membrane proteins in which stop-transfer membrane-anchor sequences become ER membrane spanning helices. It is also required for the post-translational insertion of tail-anchored/TA proteins in endoplasmic reticulum membranes. By mediating the proper cotranslational insertion of N-terminal transmembrane domains in an N-exo topology, with translocated N-terminus in the lumen of the ER, controls the topology of multi-pass membrane proteins. By regulating the insertion of various proteins in membranes, it is indirectly involved in many cellular processes. The chain is ER membrane protein complex subunit 2-B (emc2-b) from Xenopus laevis (African clawed frog).